We begin with the raw amino-acid sequence, 286 residues long: Shikimate dehydrogenase (NADP(+)) (286 aa).

Shikimate-binding positions include 22 to 24 (SFS) and Thr-69. Lys-73 functions as the Proton acceptor in the catalytic mechanism. Glu-85 serves as a coordination point for NADP(+). Positions 94 and 109 each coordinate shikimate. NADP(+) contacts are provided by residues 133–137 (GAGGA), 157–162 (NRTIDK), and Leu-231. Shikimate is bound at residue Tyr-233. Gly-254 provides a ligand contact to NADP(+).

This sequence belongs to the shikimate dehydrogenase family. As to quaternary structure, homodimer.

It catalyses the reaction shikimate + NADP(+) = 3-dehydroshikimate + NADPH + H(+). Its pathway is metabolic intermediate biosynthesis; chorismate biosynthesis; chorismate from D-erythrose 4-phosphate and phosphoenolpyruvate: step 4/7. Functionally, involved in the biosynthesis of the chorismate, which leads to the biosynthesis of aromatic amino acids. Catalyzes the reversible NADPH linked reduction of 3-dehydroshikimate (DHSA) to yield shikimate (SA). The sequence is that of Shikimate dehydrogenase (NADP(+)) from Alkaliphilus oremlandii (strain OhILAs) (Clostridium oremlandii (strain OhILAs)).